The sequence spans 709 residues: Leucine-rich repeat and calponin homology domain-containing protein 1 (709 aa).

Basic residues predominate over residues 24–37 (LHQHHQHHQHHQHH). The segment at 24–49 (LHQHHQHHQHHQHHGGTGGTGFNLPL) is disordered. LRR repeat units lie at residues 60 to 83 (AANS…TAPG), 86 to 108 (LSDT…ELCQ), 109 to 131 (FVSL…AIVN), 132 to 155 (LQML…LCGL), 157 to 176 (LKVL…EIGQ), 177 to 199 (LKQL…QIGQ), 200 to 223 (LKSL…LVDL), 225 to 244 (LVKF…CFRE), and 245 to 268 (MKQL…ICTK). Composition is skewed to basic and acidic residues over residues 301 to 312 (HQHVEDSKKDSD) and 381 to 390 (QEREQLAGRA). The segment at 301–390 (HQHVEDSKKD…QEREQLAGRA (90 aa)) is disordered. 3 positions are modified to phosphoserine: S395, S518, and S522. The segment at 504–526 (SNGSQYSPNEIRENSPSVSPTAN) is disordered. T581 carries the post-translational modification Phosphothreonine. Positions 589–702 (MREEKELVEQ…TTVQALLDVT (114 aa)) constitute a Calponin-homology (CH) domain.

As to quaternary structure, interacts (via LRR repeats) with unphosphorylated DOCK8 (via DHR-2 domain); the interaction prevents the association between DOCK8 and CDC42.

It localises to the cytoplasm. Acts as a negative regulator of GTPase CDC42 by sequestering CDC42-guanine exchange factor DOCK8. Probably by preventing CDC42 activation, negatively regulates CD4(+) T-cell migration in response to chemokine stimulation. This chain is Leucine-rich repeat and calponin homology domain-containing protein 1 (Lrch1), found in Mus musculus (Mouse).